The sequence spans 271 residues: Eukaryotic translation initiation factor 3 subunit G (271 aa).

3 disordered regions span residues 1-26, 63-119, and 147-187; these read MSTT…TNPD, AQRK…AQKL, and TTSS…RDDS. S77 carries the post-translational modification Phosphoserine. In terms of domain architecture, RRM spans 188 to 267; the sequence is TTLKVSQLNS…LILHLEWSKK (80 aa).

It belongs to the eIF-3 subunit G family. In terms of assembly, component of the eukaryotic translation initiation factor 3 (eIF-3) complex.

The protein localises to the cytoplasm. In terms of biological role, RNA-binding component of the eukaryotic translation initiation factor 3 (eIF-3) complex, which is involved in protein synthesis of a specialized repertoire of mRNAs and, together with other initiation factors, stimulates binding of mRNA and methionyl-tRNAi to the 40S ribosome. The eIF-3 complex specifically targets and initiates translation of a subset of mRNAs involved in cell proliferation. This subunit can bind 18S rRNA. The sequence is that of Eukaryotic translation initiation factor 3 subunit G from Scheffersomyces stipitis (strain ATCC 58785 / CBS 6054 / NBRC 10063 / NRRL Y-11545) (Yeast).